The following is a 100-amino-acid chain: Urease subunit gamma (100 aa).

This sequence belongs to the urease gamma subunit family. Heterotrimer of UreA (gamma), UreB (beta) and UreC (alpha) subunits. Three heterotrimers associate to form the active enzyme.

The protein localises to the cytoplasm. It catalyses the reaction urea + 2 H2O + H(+) = hydrogencarbonate + 2 NH4(+). Its pathway is nitrogen metabolism; urea degradation; CO(2) and NH(3) from urea (urease route): step 1/1. The chain is Urease subunit gamma from Prochlorococcus marinus (strain NATL2A).